The chain runs to 337 residues: RNA 3'-terminal phosphate cyclase (337 aa).

ATP is bound by residues Q101 and 282–285; that span reads HMSD. Catalysis depends on H306, which acts as the Tele-AMP-histidine intermediate.

It belongs to the RNA 3'-terminal cyclase family. Type 1 subfamily.

The protein localises to the cytoplasm. The enzyme catalyses a 3'-end 3'-phospho-ribonucleotide-RNA + ATP = a 3'-end 2',3'-cyclophospho-ribonucleotide-RNA + AMP + diphosphate. Catalyzes the conversion of 3'-phosphate to a 2',3'-cyclic phosphodiester at the end of RNA. The mechanism of action of the enzyme occurs in 3 steps: (A) adenylation of the enzyme by ATP; (B) transfer of adenylate to an RNA-N3'P to produce RNA-N3'PP5'A; (C) and attack of the adjacent 2'-hydroxyl on the 3'-phosphorus in the diester linkage to produce the cyclic end product. The biological role of this enzyme is unknown but it is likely to function in some aspects of cellular RNA processing. The sequence is that of RNA 3'-terminal phosphate cyclase (rtcA) from Saccharolobus solfataricus (strain ATCC 35092 / DSM 1617 / JCM 11322 / P2) (Sulfolobus solfataricus).